Reading from the N-terminus, the 859-residue chain is Paladin (859 aa).

The tract at residues 1-34 (MGTTASTAQQTVSAGTSLEGLQGGSSSSMDSQHS) is disordered. G2 carries the N-myristoyl glycine lipid modification. S89 is subject to Phosphoserine.

Belongs to the paladin family. Vascular expression detected in the central nervous system, kidney, lung, heart, skeletal muscle, white adipose tissue (WAT), brown adipose tissue, liver, pancreas and spleen. Not expressed in all vessels: for instance, not expressed in capillaries in the brain, and expressed mainly in large vessels in the heart, WAT, liver, pancreas and kidney. Predominant nonvascular expression in myocardium and lung mesenchyme. In large vessels, primarily expressed by smooth muscle cells, but occasionally detected at low levels in the endothelium. Expressed in various cells of the hematopoietic lineage.

It is found in the cytoplasm. The protein resides in the cytosol. This is Paladin (Pald1) from Mus musculus (Mouse).